A 251-amino-acid chain; its full sequence is Cell division protein ZapD (251 aa).

This sequence belongs to the ZapD family. Interacts with FtsZ.

The protein localises to the cytoplasm. Cell division factor that enhances FtsZ-ring assembly. Directly interacts with FtsZ and promotes bundling of FtsZ protofilaments, with a reduction in FtsZ GTPase activity. The polypeptide is Cell division protein ZapD (Burkholderia mallei (strain NCTC 10247)).